Reading from the N-terminus, the 270-residue chain is MKVAIVTKINCKSCINIARIIISALPSDWDIIYEKSLARAIKKPGLEINEINADIIIVIGGDGTILRTAQFAHGNILGINVGGLGFLSEIEIGNIEASILKLIRNEYTIIEYMGLDVYVNGVYSGKAINDAVIHTDKVSKIRKFRLYENNYFIETTSADGVIVATPIGSTSYSFSAGGPILMPNLNGIVVSYIAPVGFRSRSIVFSEKTDLKIAIVGERSLLTIDGQIEKKLSKNDVVNIRVSENGARFISMYTNFYEKLREKLIKDVVN.

The Proton acceptor role is filled by Asp-62. NAD(+)-binding positions include 62–63, Arg-67, 129–130, Lys-140, Asp-159, Ile-167, 170–175, Ala-194, and Gln-227; these read DG, ND, and TSYSFS.

It belongs to the NAD kinase family. The cofactor is a divalent metal cation.

Its subcellular location is the cytoplasm. The enzyme catalyses NAD(+) + ATP = ADP + NADP(+) + H(+). In terms of biological role, involved in the regulation of the intracellular balance of NAD and NADP, and is a key enzyme in the biosynthesis of NADP. Catalyzes specifically the phosphorylation on 2'-hydroxyl of the adenosine moiety of NAD to yield NADP. The sequence is that of NAD kinase from Picrophilus torridus (strain ATCC 700027 / DSM 9790 / JCM 10055 / NBRC 100828 / KAW 2/3).